We begin with the raw amino-acid sequence, 357 residues long: MTTLKNDRFLRALLREPVDTTPIWMMRQAGRYLPEYRETRSKAGDFLSLCKNTEFACEVTLQPLRRYDLDAAILFSDILTIPDALGLGLYFETGEGPKFHKTVRTEQDVANLPKLNAKADLDYVMNAVSTIRSALGGQVPLIGFSGSPWTLATYMVEGGSSKEFRFTKQMMYAQPEVLHALLDHLADSVIDYLNAQIDAGAQAIQIFDSWGGALAHREYVEFSLNYMNKIIAGLQREKDGRRIPVIVFTKGGGQWLEPMIASGADALGLDWTTPLNTARNVVSGRVALQGNLDPAVLYGSAASIEKAVKAMLDDAYANGEKTGYVANLGHGITQWVDPAQPKIFVDTVHEYSAKYLG.

Substrate contacts are provided by residues 27-31, D77, Y154, S209, and H330; that span reads RQAGR.

The protein belongs to the uroporphyrinogen decarboxylase family. As to quaternary structure, homodimer.

The protein localises to the cytoplasm. It carries out the reaction uroporphyrinogen III + 4 H(+) = coproporphyrinogen III + 4 CO2. It participates in porphyrin-containing compound metabolism; protoporphyrin-IX biosynthesis; coproporphyrinogen-III from 5-aminolevulinate: step 4/4. In terms of biological role, catalyzes the decarboxylation of four acetate groups of uroporphyrinogen-III to yield coproporphyrinogen-III. In Acinetobacter baumannii (strain ACICU), this protein is Uroporphyrinogen decarboxylase.